Consider the following 298-residue polypeptide: Ectoine dioxygenase (298 aa).

The span at 1 to 18 (MLQQAIDRDPVDRIDRYP) shows a compositional bias: basic and acidic residues. Residues 1-26 (MLQQAIDRDPVDRIDRYPTRTAEPAP) are disordered. Residue glutamine 133 coordinates L-ectoine. Residues histidine 150, aspartate 152, and histidine 251 each coordinate Fe cation.

Belongs to the PhyH family. EctD subfamily. Homodimer. It depends on Fe(2+) as a cofactor.

It carries out the reaction L-ectoine + 2-oxoglutarate + O2 = 5-hydroxyectoine + succinate + CO2. In terms of biological role, involved in the biosynthesis of 5-hydroxyectoine, called compatible solute, which helps organisms to survive extreme osmotic stress by acting as a highly soluble organic osmolyte. Catalyzes the 2-oxoglutarate-dependent selective hydroxylation of L-ectoine to yield (4S,5S)-5-hydroxyectoine. The chain is Ectoine dioxygenase from Nocardia farcinica (strain IFM 10152).